The sequence spans 345 residues: tRNA-specific 2-thiouridylase MnmA (345 aa).

ATP is bound by residues 6 to 13 (AMSGGVDS) and Leu-32. The Nucleophile role is filled by Cys-100. Cys-100 and Cys-197 are disulfide-bonded. Position 124 (Gly-124) interacts with ATP. The tract at residues 146 to 148 (RDQ) is interaction with tRNA. The active-site Cysteine persulfide intermediate is Cys-197.

It belongs to the MnmA/TRMU family.

The protein localises to the cytoplasm. It catalyses the reaction S-sulfanyl-L-cysteinyl-[protein] + uridine(34) in tRNA + AH2 + ATP = 2-thiouridine(34) in tRNA + L-cysteinyl-[protein] + A + AMP + diphosphate + H(+). Catalyzes the 2-thiolation of uridine at the wobble position (U34) of tRNA, leading to the formation of s(2)U34. The chain is tRNA-specific 2-thiouridylase MnmA from Acidiphilium cryptum (strain JF-5).